A 186-amino-acid polypeptide reads, in one-letter code: CASP-like protein ARALYDRAFT_316979 (186 aa).

The Cytoplasmic segment spans residues 1 to 23 (MRRNGDGEEVVAKRRRRIKELVQ). The helical transmembrane segment at 24–44 (VALRGGCLAASATAMAVMLTA) threads the bilayer. The Extracellular segment spans residues 45-70 (TEEGVADIYGFKLTLSSNWSFSPSYQ). Asn62 is a glycosylation site (N-linked (GlcNAc...) asparagine). Residues 71-91 (YVVGACTGTVLYSLFQLCLGV) traverse the membrane as a helical segment. Topologically, residues 92–115 (YRLLTGSPITPSRFQAWLCFTSDQ) are cytoplasmic. Residues 116-132 (LFGYLMMSAGSAGSGVT) traverse the membrane as a helical segment. Over 133–161 (NLNKTGIRHTPLPDFCKTLSSFCNHVALS) the chain is Extracellular. N-linked (GlcNAc...) asparagine glycosylation is present at Asn135. Residues 162-182 (LLLVFLSFIFLASSSFFTVLV) form a helical membrane-spanning segment. The Cytoplasmic segment spans residues 183-186 (LSTP).

Belongs to the Casparian strip membrane proteins (CASP) family. As to quaternary structure, homodimer and heterodimers.

The protein localises to the cell membrane. The polypeptide is CASP-like protein ARALYDRAFT_316979 (Arabidopsis lyrata subsp. lyrata (Lyre-leaved rock-cress)).